The primary structure comprises 170 residues: Cathelicidin antimicrobial peptide (170 aa).

Residues 1–30 (MKTQRDGHSLGWWSLVLLLLGLVMPLAIIA) form the signal peptide. Positions 31 to 131 (QVLSYKEAVL…DISCDKDNKR (101 aa)) are cleaved as a propeptide — cathelin-like domain (CLD). 2 disulfides stabilise this stretch: C86–C97 and C108–C125. Positions 150–162 (SKRIVQRIKDFLR) are active core.

It belongs to the cathelicidin family. Monomer, homodimer or homotrimer (in vitro). Oligomerizes as tetra- or hexamer in solution (in vitro). Proteolytically cleaved by proteinase PRTN3 into antibacterial peptide LL-37. Proteolytically cleaved by cathepsin CTSG and neutrophil elastase ELANE. Post-translationally, resistant to proteolytic degradation in solution, and when bound to both zwitterionic (mimicking mammalian membranes) and negatively charged membranes (mimicking bacterial membranes). In terms of processing, after secretion onto the skin surface, the CAMP gene product is processed by a serine protease-dependent mechanism into multiple novel antimicrobial peptides distinct from and shorter than cathelicidin LL-37. These peptides show enhanced antimicrobial action, acquiring the ability to kill skin pathogens such as S.aureus, E.coli and C.albicans. These peptides have lost the ability to stimulate CXCL8/IL8 release from keratinocytes. The peptides act synergistically, killing bacteria at lower concentrations when present together, and maintain activity at increased salt condition.

The protein localises to the secreted. It is found in the vesicle. Its function is as follows. Antimicrobial protein that is an integral component of the innate immune system. Binds to bacterial lipopolysaccharides (LPS). Acts via neutrophil N-formyl peptide receptors to enhance the release of CXCL2. Postsecretory processing generates multiple cathelicidin antimicrobial peptides with various lengths which act as a topical antimicrobial defense in sweat on skin. The unprocessed precursor form, cathelicidin antimicrobial peptide, inhibits the growth of Gram-negative E.coli and E.aerogenes with efficiencies comparable to that of the mature peptide LL-37 (in vitro). Antimicrobial peptide that is an integral component of the innate immune system. Binds to bacterial lipopolysaccharides (LPS). Causes membrane permeabilization by forming transmembrane pores (in vitro). Causes lysis of E.coli. Exhibits antimicrobial activity against Gram-negative bacteria such as P.aeruginosa, S.typhimurium, E.aerogenes, E.coli and P.syringae, Gram-positive bacteria such as L.monocytogenes, S.epidermidis, S.pyogenes and S.aureus, as well as vancomycin-resistant enterococci (in vitro). Exhibits antimicrobial activity against methicillin-resistant S.aureus, P.mirabilis, and C.albicans in low-salt media, but not in media containing 100 mM NaCl (in vitro). Forms chiral supramolecular assemblies with quinolone signal (PQS) molecules of P.aeruginosa, which may lead to interference of bacterial quorum signaling and perturbance of bacterial biofilm formation. May form supramolecular fiber-like assemblies on bacterial membranes. Induces cytokine and chemokine producation as well as TNF/TNFA and CSF2/GMCSF production in normal human keratinocytes. Exhibits hemolytic activity against red blood cells. Functionally, exhibits antimicrobial activity against E.coli and B.megaterium (in vitro). The protein is Cathelicidin antimicrobial peptide of Gorilla gorilla gorilla (Western lowland gorilla).